Here is a 484-residue protein sequence, read N- to C-terminus: Phosphatidylinositol N-acetylglucosaminyltransferase subunit A (484 aa).

Topologically, residues 1–421 (MACRGGAGNG…RLDRLISHCG (421 aa)) are cytoplasmic. A phosphoserine mark is found at Ser-21 and Ser-24. Residues 422 to 442 (PVTGYIFALLAVFNFLFLIFL) traverse the membrane as a helical segment. Over 443-484 (RWMTPDSIIDVAIDATGPRGAWTNNYSHSKRGGENNEISETR) the chain is Lumenal. An N-linked (GlcNAc...) asparagine glycan is attached at Asn-467.

The protein belongs to the glycosyltransferase group 1 family. Glycosyltransferase 4 subfamily. In terms of assembly, component of the glycosylphosphatidylinositol-N-acetylglucosaminyltransferase (GPI-GnT) complex composed at least by PIGA, PIGC, PIGH, PIGP, PIGQ, PIGY and DPM2. Interacts with PIGC, PIGH, PIGP, PIGQ and DPM2. Interacts directly with PIGY; this interaction regulates glycosylphosphatidylinositol-N-acetylglucosaminyltransferase activity. Interacts with PIGQ.

It is found in the endoplasmic reticulum membrane. It carries out the reaction a 1,2-diacyl-sn-glycero-3-phospho-(1D-myo-inositol) + UDP-N-acetyl-alpha-D-glucosamine = a 6-(N-acetyl-alpha-D-glucosaminyl)-1-(1,2-diacyl-sn-glycero-3-phospho)-1D-myo-inositol + UDP + H(+). Its pathway is glycolipid biosynthesis; glycosylphosphatidylinositol-anchor biosynthesis. Its function is as follows. Catalytic subunit of the glycosylphosphatidylinositol-N-acetylglucosaminyltransferase (GPI-GnT) complex that catalyzes the transfer of N-acetylglucosamine from UDP-N-acetylglucosamine to phosphatidylinositol and participates in the first step of GPI biosynthesis. The protein is Phosphatidylinositol N-acetylglucosaminyltransferase subunit A of Homo sapiens (Human).